A 452-amino-acid chain; its full sequence is UDP-N-acetylmuramoylalanine--D-glutamate ligase (452 aa).

115–121 provides a ligand contact to ATP; it reads GTNGKTT.

This sequence belongs to the MurCDEF family.

The protein resides in the cytoplasm. It carries out the reaction UDP-N-acetyl-alpha-D-muramoyl-L-alanine + D-glutamate + ATP = UDP-N-acetyl-alpha-D-muramoyl-L-alanyl-D-glutamate + ADP + phosphate + H(+). Its pathway is cell wall biogenesis; peptidoglycan biosynthesis. Its function is as follows. Cell wall formation. Catalyzes the addition of glutamate to the nucleotide precursor UDP-N-acetylmuramoyl-L-alanine (UMA). This Elusimicrobium minutum (strain Pei191) protein is UDP-N-acetylmuramoylalanine--D-glutamate ligase.